The following is a 163-amino-acid chain: ATP synthase subunit b 1 (163 aa).

The helical transmembrane segment at 7–27 (AETWVAIAFVILLGVFAYLGV) threads the bilayer.

Belongs to the ATPase B chain family. In terms of assembly, F-type ATPases have 2 components, F(1) - the catalytic core - and F(0) - the membrane proton channel. F(1) has five subunits: alpha(3), beta(3), gamma(1), delta(1), epsilon(1). F(0) has three main subunits: a(1), b(2) and c(10-14). The alpha and beta chains form an alternating ring which encloses part of the gamma chain. F(1) is attached to F(0) by a central stalk formed by the gamma and epsilon chains, while a peripheral stalk is formed by the delta and b chains.

It is found in the cell inner membrane. F(1)F(0) ATP synthase produces ATP from ADP in the presence of a proton or sodium gradient. F-type ATPases consist of two structural domains, F(1) containing the extramembraneous catalytic core and F(0) containing the membrane proton channel, linked together by a central stalk and a peripheral stalk. During catalysis, ATP synthesis in the catalytic domain of F(1) is coupled via a rotary mechanism of the central stalk subunits to proton translocation. In terms of biological role, component of the F(0) channel, it forms part of the peripheral stalk, linking F(1) to F(0). The chain is ATP synthase subunit b 1 from Rhodopseudomonas palustris (strain ATCC BAA-98 / CGA009).